Reading from the N-terminus, the 723-residue chain is Homeobox protein vnd (723 aa).

4 disordered regions span residues 1–115, 224–307, 465–549, and 703–723; these read MTTS…GLAP, AHHG…HHHP, GSSG…RKRR, and HAHA…AWWP. The span at 10-22 shows a compositional bias: basic and acidic residues; it reads TPSKRDRDRERDN. A compositionally biased stretch (low complexity) spans 23–36; it reads SSGLGSAGSLPASP. The segment covering 37 to 48 has biased composition (polar residues); it reads QSAITVSPSSPA. Basic and acidic residues predominate over residues 61 to 92; it reads LERKREREDREDREDRKERQERHERDRDHERF. Over residues 97–111 the composition is skewed to low complexity; it reads STASTTVPTNTSSSS. A compositionally biased stretch (basic and acidic residues) spans 226–235; that stretch reads HGSDLSHHSA. Polar residues predominate over residues 237-255; the sequence is ESTSGHRGQGSHTSPSALS. Residues 278-289 show a composition bias toward basic and acidic residues; the sequence is EADHHSTTEHHA. Basic residues predominate over residues 298 to 307; that stretch reads HPHHQQHHHP. Residues 483–493 are compositionally biased toward low complexity; the sequence is NNNNNTTNNNN. A compositionally biased stretch (acidic residues) spans 512-528; sequence LNEDGIEEDIDDVDDAD. The segment at residues 545–604 is a DNA-binding region (homeobox); it reads KRKRRVLFTKAQTYELERRFRQQRYLSAPEREHLASLIRLTPTQVKIWFQNHRYKTKRAQ. Residues 703 to 716 show a composition bias toward basic residues; sequence HAHAHGHGHPHAHA.

The protein belongs to the NK-2 homeobox family. In terms of tissue distribution, expressed in the CNS and midgut.

It localises to the nucleus. In terms of biological role, probable transcriptional regulator involved in the regulation of the proneural AS-C genes and the neurogenic genes of the enhancer of split complex. Could specifically activate proneural genes in the ventral-most neuroectoderm. The chain is Homeobox protein vnd (vnd) from Drosophila melanogaster (Fruit fly).